Reading from the N-terminus, the 194-residue chain is HTH-type transcriptional regulator BetI (194 aa).

In terms of domain architecture, HTH tetR-type spans 8–68 (EIRRAQLIDA…ATMRHVLRDL (61 aa)). The H-T-H motif DNA-binding region spans 31 to 50 (TLASVAQRANISTGIVSHYF).

Its pathway is amine and polyamine biosynthesis; betaine biosynthesis via choline pathway [regulation]. Functionally, repressor involved in the biosynthesis of the osmoprotectant glycine betaine. It represses transcription of the choline transporter BetT and the genes of BetAB involved in the synthesis of glycine betaine. The chain is HTH-type transcriptional regulator BetI from Burkholderia lata (strain ATCC 17760 / DSM 23089 / LMG 22485 / NCIMB 9086 / R18194 / 383).